The primary structure comprises 876 residues: MAP7 domain-containing protein 3 (876 aa).

The residue at position 1 (M1) is an N-acetylmethionine. The stretch at 65-144 (NDIKQRLARE…DEAQKEKFTA (80 aa)) forms a coiled coil. Disordered stretches follow at residues 72–137 (ARER…KDEA) and 170–246 (AMAN…KPRV). The span at 171 to 183 (MANSESKTANKRS) shows a compositional bias: polar residues. Residue S185 is modified to Phosphoserine. Residues 191-211 (QGTSALIRQMPLSSAGLQNSV) are compositionally biased toward polar residues. The segment covering 214–244 (RKTDKERSSSLNRRDSNLHSSTDKEQAERKP) has biased composition (basic and acidic residues). At S322 the chain carries Phosphoserine. The disordered stretch occupies residues 407–475 (EAAPEGSLEA…ARDAPKKSEM (69 aa)). A compositionally biased stretch (basic and acidic residues) spans 425–438 (APKESVKGSPKESM). Phosphoserine is present on residues S441, S457, and S461. The span at 465–475 (KARDAPKKSEM) shows a compositional bias: basic and acidic residues. At S490 the chain carries Phosphoserine. Disordered stretches follow at residues 509–533 (SPIS…SKQS), 613–697 (QREK…KKEH), and 723–754 (RKTD…SDKD). Residues 510–521 (PISTNRQIQKNC) are compositionally biased toward polar residues. S524 is subject to Phosphoserine. Coiled coils occupy residues 558-640 (VKKK…MAKE) and 689-724 (EADK…RTRK). Composition is skewed to basic and acidic residues over residues 613 to 639 (QREK…DMAK) and 680 to 697 (GDAK…KKEH). Over residues 742 to 752 (EEAEADNEESD) the composition is skewed to acidic residues. Residues S770 and S817 each carry the phosphoserine modification. Residues 802–876 (PKTYFNGDLK…LPKSSDTFRQ (75 aa)) are disordered. The span at 820–830 (DTSIQEVVSRP) shows a compositional bias: polar residues. Residues 831–842 (SSKRMTSHTTKT) show a composition bias toward basic residues. At S832 the chain carries Phosphoserine. Polar residues predominate over residues 848–860 (TNTTSRSSAQTKS). A compositionally biased stretch (basic and acidic residues) spans 861-876 (EGFHDILPKSSDTFRQ).

Belongs to the MAP7 family. In terms of assembly, interacts (via N-terminus coiled coil domains) with tubulin and microtubules.

It is found in the cytoplasm. The protein resides in the cytoskeleton. Its subcellular location is the spindle. In terms of biological role, promotes the assembly and stability of microtubules. The chain is MAP7 domain-containing protein 3 (MAP7D3) from Homo sapiens (Human).